We begin with the raw amino-acid sequence, 350 residues long: MVRSPVSDKFCIPDTLASWPYPRILNPHYAEEKAASAAWTKGFGAFGPKAQDAFDRCDFNLLACLAYPIATPERCRSGCDLMNLFFVIDEHSDTHGEETVRKMKDVVMDAIRNPHKPRPNDEWIGGEIARQFWERAMCYASEISQRRFIDTFDEYLESVVDQAADRDSARIRDIESYINIRRNTIGAKPSFVIMEQGMDIPDNVFENEVFQRLRMATIDMLCLGNDIVSYNIEQARGDDSHNIVRIVMNELDTDVPRAMDWVAQRHTQLEREFFTALSELPTWGEPIDGWVKEYVYGLGNWVRANDQWSFESQRYFGTKGMEIMKSRWLSVLPKVRPAEVGPQLVDQSLL.

Mg(2+)-binding residues include Asp-89, Asn-225, Ser-229, and Glu-233. The D(D/E)XX(D/E) motif motif lies at 89–93; it reads DEHSD. An NSE motif motif is present at residues 225-233; it reads NDIVSYNIE. (2E,6E)-farnesyl diphosphate contacts are provided by Arg-314 and Tyr-315.

Belongs to the terpene synthase family. Mg(2+) is required as a cofactor. It depends on Mn(2+) as a cofactor. Ca(2+) serves as cofactor. The cofactor is Ni(2+). Requires Co(2+) as cofactor.

The enzyme catalyses (2E,6E)-farnesyl diphosphate = Delta(6)-protoilludene + diphosphate. It catalyses the reaction (2E,6E)-farnesyl diphosphate = alpha-selinene + diphosphate. Ca(2+) switches the cyclization mechanism of delta(6)-protoilludene synthase from 1,11 to 1,10 cyclization which leads to the production of beta-elemene. Terpene cyclase that catalyzes the cyclization of farnesyl diphosphate (FPP) to delta(6)-protoilludene. In presence of Ca(2+), a significant switch from 1,11 to a dual 1,11/1,10 cyclization occurs, producing beta-elemene as the major product, with lower levels of delta(6)-protoilludene and (E)-beta-caryophyllene, and traces of beta-selinene and alpha-selinene. This Stereum hirsutum (strain FP-91666) (White-rot fungus) protein is Delta(6)-protoilludene synthase STEHIDRAFT_64702.